A 312-amino-acid polypeptide reads, in one-letter code: Putative endo-1,4-beta-xylanase (312 aa).

In terms of domain architecture, GH10 spans 1 to 301 (MKQQYLLDYE…KPCFYSFLQA (301 aa)). Residue E104 is the Proton donor of the active site. Catalysis depends on E216, which acts as the Nucleophile.

This sequence belongs to the glycosyl hydrolase 10 (cellulase F) family.

It catalyses the reaction Endohydrolysis of (1-&gt;4)-beta-D-xylosidic linkages in xylans.. It functions in the pathway glycan degradation; xylan degradation. Could be a xylanase. In Caldicellulosiruptor saccharolyticus (Caldocellum saccharolyticum), this protein is Putative endo-1,4-beta-xylanase.